The chain runs to 401 residues: Probable 2,3-bisphosphoglycerate-independent phosphoglycerate mutase (401 aa).

This sequence belongs to the BPG-independent phosphoglycerate mutase family. A-PGAM subfamily.

The catalysed reaction is (2R)-2-phosphoglycerate = (2R)-3-phosphoglycerate. Its pathway is carbohydrate degradation; glycolysis; pyruvate from D-glyceraldehyde 3-phosphate: step 3/5. Its function is as follows. Catalyzes the interconversion of 2-phosphoglycerate and 3-phosphoglycerate. The sequence is that of Probable 2,3-bisphosphoglycerate-independent phosphoglycerate mutase from Thermotoga petrophila (strain ATCC BAA-488 / DSM 13995 / JCM 10881 / RKU-1).